A 383-amino-acid chain; its full sequence is uncharacterized protein (383 aa).

Belongs to the peptidase M20 family.

This is an uncharacterized protein from Staphylococcus aureus (strain bovine RF122 / ET3-1).